A 143-amino-acid polypeptide reads, in one-letter code: Large ribosomal subunit protein uL15 (143 aa).

Residues 1–51 (MELNGIKPAAGAKHAKRRVGRGIGSGIGKTAGRGHKGQKSRAGGFHKVGFE) are disordered. Over residues 21-31 (RGIGSGIGKTA) the composition is skewed to gly residues.

It belongs to the universal ribosomal protein uL15 family. As to quaternary structure, part of the 50S ribosomal subunit.

Functionally, binds to the 23S rRNA. This chain is Large ribosomal subunit protein uL15, found in Variovorax paradoxus (strain S110).